The following is a 472-amino-acid chain: Protein PIN-LIKES 1 (472 aa).

Topologically, residues 1–93 (MSLTQSAKLH…FYSMRMRLLD (93 aa)) are lumenal. The helical transmembrane segment at 94–114 (LFITSSIPVAKILLITGIGFY) threads the bilayer. Over 115–133 (LALDQVNILNHDARKQLNN) the chain is Cytoplasmic. Residues 134-154 (IVFYVFSPSLVASSLSETITY) traverse the membrane as a helical segment. Over 155–161 (ESMVKMW) the chain is Lumenal. A helical membrane pass occupies residues 162 to 182 (FMPLNVLLTFIIGSFLGWIVI). The Cytoplasmic portion of the chain corresponds to 183–193 (KITKPPSHLRG). A helical transmembrane segment spans residues 194–214 (IIVGCCAAGNLGNMPLIIIPA). Over 215-231 (ICNEKGSPFGDPESCEK) the chain is Lumenal. Residues 232 to 252 (FGLGYIALSMAIGAIYIWTYV) form a helical membrane-spanning segment. At 253–309 (YNLMRMLANPAGETAINSTSSTMPLISPKVEVAEQVGTWGKVKQRVCSVAEKINLRT) the chain is on the cytoplasmic side. The helical transmembrane segment at 310 to 330 (IFAPSTIAALIALAVGLNPLL) threads the bilayer. Residues 331-347 (RKLLVGNTAPLRVIEDS) are Lumenal-facing. A helical membrane pass occupies residues 348-368 (VSLLGDGAIPVLTLIVGGNLL). At 369 to 379 (NGLRGSGINKS) the chain is on the cytoplasmic side. A helical membrane pass occupies residues 380–400 (VIMGVVVVRYLLLPILGVFIV). Over 401-413 (RGAHYLGLVTSEP) the chain is Lumenal. The chain crosses the membrane as a helical span at residues 414 to 434 (LYQFVLLLQYVVPPAMNLGTI). Over 435–446 (TQLFGSGESECS) the chain is Cytoplasmic. The helical transmembrane segment at 447-467 (VILFWSYALASVSLTVWPTFF) threads the bilayer. Residues 468–472 (MWLVA) are Lumenal-facing.

This sequence belongs to the auxin efflux carrier (TC 2.A.69.2) family. In terms of tissue distribution, expressed in flowers.

The protein resides in the endoplasmic reticulum membrane. Involved in cellular auxin homeostasis by regulating auxin metabolism. Regulates intracellular auxin accumulation at the endoplasmic reticulum and thus auxin availability for nuclear auxin signaling. The polypeptide is Protein PIN-LIKES 1 (Arabidopsis thaliana (Mouse-ear cress)).